The following is a 408-amino-acid chain: Glutamate N-acetyltransferase (408 aa).

Threonine 150, lysine 176, threonine 189, glutamate 271, asparagine 403, and threonine 408 together coordinate substrate. The active-site Nucleophile is threonine 189.

Belongs to the ArgJ family. Heterotetramer of two alpha and two beta chains.

It localises to the cytoplasm. It carries out the reaction N(2)-acetyl-L-ornithine + L-glutamate = N-acetyl-L-glutamate + L-ornithine. The protein operates within amino-acid biosynthesis; L-arginine biosynthesis; L-ornithine and N-acetyl-L-glutamate from L-glutamate and N(2)-acetyl-L-ornithine (cyclic): step 1/1. Catalyzes the transfer of the acetyl group from N(2)-acetylornithine to glutamate, forming N-acetylglutamate and L-ornithine. The sequence is that of Glutamate N-acetyltransferase from Methanococcus maripaludis (strain C5 / ATCC BAA-1333).